Here is a 612-residue protein sequence, read N- to C-terminus: Peroxisomal targeting signal receptor (612 aa).

M1 bears the N-acetylmethionine mark. Residues 1 to 24 form a disordered region; sequence MDVGSCSVGNNPLAQLHKHTQQNK. Residue C6 forms a Glycyl cysteine thioester (Cys-Gly) (interchain with G-Cter in ubiquitin) linkage. The interval 7-29 is amphipathic helix 1 (AH1); the sequence is SVGNNPLAQLHKHTQQNKSLQFN. Residues K18 and K24 each participate in a glycyl lysine isopeptide (Lys-Gly) (interchain with G-Cter in ubiquitin) cross-link. The residue at position 61 (S61) is a Phosphoserine. The TPR 1 repeat unit spans residues 64–97; it reads NMANMQRFINGEPLIDDKRRMEIGPSSGRLPPFS. The amphipathic helix 2 (AH2) stretch occupies residues 70–104; sequence RFINGEPLIDDKRRMEIGPSSGRLPPFSNVHSLQT. The WxxxF/Y motif 1 signature appears at 120–124; that stretch reads WSQEF. Residues 129-151 are disordered; the sequence is SIQNRNADTGNSEKAWQRGSTTA. The segment at 158–174 is amphipathic helix 3 (AH3); the sequence is PNTMMNNYAYASMNSLS. The segment at 182-202 is disordered; it reads AFMNQQQSGRSKEGVNEQEQQ. Residues 204 to 208 carry the WxxxF/Y motif 2 motif; it reads WTDQF. The segment at 257–273 is amphipathic helix 4 (AH4); it reads FQEVWDSIHKDAEEVLP. TPR repeat units follow at residues 313-346, 347-380, 381-418, 419-456, 457-490, 491-524, and 525-558; these read PNAYKIGCLLMENGAKLSEAALAFEAAVKEKPDH, VDAWLRLGLVQTQNEKELNGISALEECLKLDPKN, LEAMKTLAISYINEGYDMSAFTMLDKWAETKYPEIWSR, IKQQDDKFQKEKGFTHIDMNAHITKQFLQLANNLSTID, PEIQLCLGLLFYTKDDFDKTIDCFESALRVNPND, ELMWNRLGASLANSNRSEEAIQAYHRALQLKPSF, and VRARYNLAVSSMNIGCFKEAAGYLLSVLSMHEVN.

This sequence belongs to the peroxisomal targeting signal receptor family. Interacts (via WxxxF/Y and LVxEF motifs) with PEX14; promoting translocation through the PEX13-PEX14 docking complex. Monoubiquitinated at Cys-6 by PEX2 during PEX5 passage through the retrotranslocation channel: monoubiquitination acts as a signal for PEX5 extraction and is required for proper export from peroxisomes and recycling. Ubiquitination at Cys-6 is UBC4-independent but requires the presence of PEX4. When PEX5 recycling is compromised, polyubiquitinated at Lys-18 and Lys-24 by PEX10 during its passage through the retrotranslocation channel, leading to its degradation. Ubiquitination at Lys-18 and Lys-24 are UBC4-dependent. Monoubiquitination at Cys-6 and polyubiquitination at Lys-18 and Lys-24 are removed by UBP15 in the cytosol, resetting PEX5 for a subsequent import cycle.

The protein resides in the cytoplasm. The protein localises to the cytosol. Its subcellular location is the peroxisome matrix. In terms of biological role, receptor that mediates peroxisomal import of proteins containing a C-terminal PTS1-type tripeptide peroxisomal targeting signal (SKL-type). Binds to cargo proteins containing a PTS1 peroxisomal targeting signal in the cytosol, and translocates them into the peroxisome matrix by passing through the PEX13-PEX14 docking complex along with cargo proteins. PEX5 receptor is then retrotranslocated into the cytosol, leading to release of bound cargo in the peroxisome matrix, and reset for a subsequent peroxisome import cycle. This chain is Peroxisomal targeting signal receptor, found in Saccharomyces cerevisiae (strain ATCC 204508 / S288c) (Baker's yeast).